Consider the following 91-residue polypeptide: Small ribosomal subunit protein bS18 (91 aa).

The segment at 1-27 (MTQQSNTERKPRAKGPKRPRKPKVDPF) is disordered. The span at 11 to 21 (PRAKGPKRPRK) shows a compositional bias: basic residues.

This sequence belongs to the bacterial ribosomal protein bS18 family. In terms of assembly, part of the 30S ribosomal subunit. Forms a tight heterodimer with protein bS6.

Binds as a heterodimer with protein bS6 to the central domain of the 16S rRNA, where it helps stabilize the platform of the 30S subunit. This Deinococcus geothermalis (strain DSM 11300 / CIP 105573 / AG-3a) protein is Small ribosomal subunit protein bS18.